A 434-amino-acid polypeptide reads, in one-letter code: Alpha-enolase (434 aa).

Ser-40 serves as a coordination point for Mg(2+). 2 residues coordinate substrate: His-158 and Glu-167. Glu-210 (proton donor) is an active-site residue. Asp-245, Glu-293, and Asp-318 together coordinate Mg(2+). Residues Glu-293 and Asp-318 each contribute to the substrate site. Residue Lys-343 is the Proton acceptor of the active site. Residues 370-373 and Lys-394 each bind substrate; that span reads SHRS.

It belongs to the enolase family. As to quaternary structure, homodimer. Mg(2+) is required as a cofactor.

The protein localises to the cytoplasm. The catalysed reaction is (2R)-2-phosphoglycerate = phosphoenolpyruvate + H2O. Its pathway is carbohydrate degradation; glycolysis; pyruvate from D-glyceraldehyde 3-phosphate: step 4/5. In Alligator mississippiensis (American alligator), this protein is Alpha-enolase.